We begin with the raw amino-acid sequence, 195 residues long: HTH-type transcriptional regulator BetI (195 aa).

The region spanning 8 to 68 is the HTH tetR-type domain; sequence SIRRRQLIDA…ATMRDITSQL (61 aa). The H-T-H motif DNA-binding region spans 31 to 50; that stretch reads TIAQIARRAGVSTGIISHYF.

It participates in amine and polyamine biosynthesis; betaine biosynthesis via choline pathway [regulation]. Functionally, repressor involved in the biosynthesis of the osmoprotectant glycine betaine. It represses transcription of the choline transporter BetT and the genes of BetAB involved in the synthesis of glycine betaine. The protein is HTH-type transcriptional regulator BetI of Escherichia coli (strain UTI89 / UPEC).